Reading from the N-terminus, the 216-residue chain is ATP phosphoribosyltransferase (216 aa).

It belongs to the ATP phosphoribosyltransferase family. Short subfamily. Heteromultimer composed of HisG and HisZ subunits.

Its subcellular location is the cytoplasm. The catalysed reaction is 1-(5-phospho-beta-D-ribosyl)-ATP + diphosphate = 5-phospho-alpha-D-ribose 1-diphosphate + ATP. The protein operates within amino-acid biosynthesis; L-histidine biosynthesis; L-histidine from 5-phospho-alpha-D-ribose 1-diphosphate: step 1/9. Its function is as follows. Catalyzes the condensation of ATP and 5-phosphoribose 1-diphosphate to form N'-(5'-phosphoribosyl)-ATP (PR-ATP). Has a crucial role in the pathway because the rate of histidine biosynthesis seems to be controlled primarily by regulation of HisG enzymatic activity. The protein is ATP phosphoribosyltransferase of Streptococcus thermophilus (strain ATCC BAA-491 / LMD-9).